The primary structure comprises 136 residues: DNA-binding protein H-NS (136 aa).

A coiled-coil region spans residues 13-67 (TLRAQARECTLETLEEMLEKLEVVVNERREEDSQAQAEIEERTRKLQQYREMLIA). A DNA-binding region spans residues 113–118 (QGRTPA).

Belongs to the histone-like protein H-NS family. In terms of assembly, interacts with YmoA in the absence of DNA. Homodimer that oligomerizes on DNA into higher-order complexes that form bridges between disparate regions of DNA compacting it. Interacts with YmoA.

It localises to the cytoplasm. It is found in the nucleoid. Functionally, a DNA-binding protein implicated in transcriptional repression and chromosome organization and compaction. Binds nucleation sites in AT-rich DNA and bridges them, forming higher-order nucleoprotein complexes and condensing the chromosome. As many horizontally transferred genes are AT-rich, it plays a central role in silencing foreign genes. A subset of genes are repressed by H-NS in association with YmoA. Complements a number of hns deficiencies in E.coli; represses the bgl operon, represses hemolysin expression. The polypeptide is DNA-binding protein H-NS (Yersinia enterocolitica).